A 99-amino-acid polypeptide reads, in one-letter code: Aspartyl/glutamyl-tRNA(Asn/Gln) amidotransferase subunit C (99 aa).

This sequence belongs to the GatC family. In terms of assembly, heterotrimer of A, B and C subunits.

It catalyses the reaction L-glutamyl-tRNA(Gln) + L-glutamine + ATP + H2O = L-glutaminyl-tRNA(Gln) + L-glutamate + ADP + phosphate + H(+). The enzyme catalyses L-aspartyl-tRNA(Asn) + L-glutamine + ATP + H2O = L-asparaginyl-tRNA(Asn) + L-glutamate + ADP + phosphate + 2 H(+). Allows the formation of correctly charged Asn-tRNA(Asn) or Gln-tRNA(Gln) through the transamidation of misacylated Asp-tRNA(Asn) or Glu-tRNA(Gln) in organisms which lack either or both of asparaginyl-tRNA or glutaminyl-tRNA synthetases. The reaction takes place in the presence of glutamine and ATP through an activated phospho-Asp-tRNA(Asn) or phospho-Glu-tRNA(Gln). In Rhodococcus opacus (strain B4), this protein is Aspartyl/glutamyl-tRNA(Asn/Gln) amidotransferase subunit C.